The sequence spans 600 residues: Proline--tRNA ligase (600 aa).

It belongs to the class-II aminoacyl-tRNA synthetase family. ProS type 1 subfamily. As to quaternary structure, homodimer.

It localises to the cytoplasm. The catalysed reaction is tRNA(Pro) + L-proline + ATP = L-prolyl-tRNA(Pro) + AMP + diphosphate. In terms of biological role, catalyzes the attachment of proline to tRNA(Pro) in a two-step reaction: proline is first activated by ATP to form Pro-AMP and then transferred to the acceptor end of tRNA(Pro). As ProRS can inadvertently accommodate and process non-cognate amino acids such as alanine and cysteine, to avoid such errors it has two additional distinct editing activities against alanine. One activity is designated as 'pretransfer' editing and involves the tRNA(Pro)-independent hydrolysis of activated Ala-AMP. The other activity is designated 'posttransfer' editing and involves deacylation of mischarged Ala-tRNA(Pro). The misacylated Cys-tRNA(Pro) is not edited by ProRS. The protein is Proline--tRNA ligase of Prochlorococcus marinus (strain MIT 9215).